Reading from the N-terminus, the 329-residue chain is Probable nicotianamine synthase 7 (329 aa).

It belongs to the nicotianamine synthase (NAS)-like family.

It catalyses the reaction 3 S-adenosyl-L-methionine = nicotianamine + 3 S-methyl-5'-thioadenosine + 3 H(+). Functionally, synthesizes nicotianamine, a polyamine that is the first intermediate in the synthesis of the phytosiderophores of the mugineic acid type found in gramineae which serves as a sensor for the physiological iron status within the plant, and/or might be involved in the transport of iron. In Hordeum vulgare (Barley), this protein is Probable nicotianamine synthase 7 (NAS7).